Consider the following 215-residue polypeptide: Pyrrolidone-carboxylate peptidase (215 aa).

Residues Glu-80, Cys-143, and His-167 contribute to the active site.

This sequence belongs to the peptidase C15 family. Homotetramer.

It is found in the cytoplasm. The catalysed reaction is Release of an N-terminal pyroglutamyl group from a polypeptide, the second amino acid generally not being Pro.. Its function is as follows. Removes 5-oxoproline from various penultimate amino acid residues except L-proline. The sequence is that of Pyrrolidone-carboxylate peptidase from Bacillus cereus (strain ATCC 14579 / DSM 31 / CCUG 7414 / JCM 2152 / NBRC 15305 / NCIMB 9373 / NCTC 2599 / NRRL B-3711).